The primary structure comprises 195 residues: Imidazoleglycerol-phosphate dehydratase (195 aa).

The protein belongs to the imidazoleglycerol-phosphate dehydratase family.

It is found in the cytoplasm. It carries out the reaction D-erythro-1-(imidazol-4-yl)glycerol 3-phosphate = 3-(imidazol-4-yl)-2-oxopropyl phosphate + H2O. It functions in the pathway amino-acid biosynthesis; L-histidine biosynthesis; L-histidine from 5-phospho-alpha-D-ribose 1-diphosphate: step 6/9. This chain is Imidazoleglycerol-phosphate dehydratase, found in Exiguobacterium sp. (strain ATCC BAA-1283 / AT1b).